The chain runs to 168 residues: Shikimate kinase (168 aa).

10-15 is an ATP binding site; sequence GVGKTT. Residue Thr14 coordinates Mg(2+). Positions 32, 56, and 77 each coordinate substrate. Residue Arg115 coordinates ATP. Arg133 contacts substrate.

Belongs to the shikimate kinase family. Monomer. It depends on Mg(2+) as a cofactor.

The protein resides in the cytoplasm. The enzyme catalyses shikimate + ATP = 3-phosphoshikimate + ADP + H(+). It functions in the pathway metabolic intermediate biosynthesis; chorismate biosynthesis; chorismate from D-erythrose 4-phosphate and phosphoenolpyruvate: step 5/7. Its function is as follows. Catalyzes the specific phosphorylation of the 3-hydroxyl group of shikimic acid using ATP as a cosubstrate. The sequence is that of Shikimate kinase from Macrococcus caseolyticus (strain JCSC5402) (Macrococcoides caseolyticum).